We begin with the raw amino-acid sequence, 337 residues long: PHD finger protein 11 (337 aa).

The segment at 42–78 adopts a C2HC pre-PHD-type zinc-finger fold; that stretch reads KRICALCPKDLECSVLYFAQSENIAAHENCLLYSSAL. The PHD-type zinc-finger motif lies at 108–160; it reads LKCTFCGKKGATVGCDLKSCFKNYHFFCAKNDHAVLQADGRTGIYKVFCQQHA.

Interacts with BRCA1 and RELA.

Its subcellular location is the nucleus. Positive regulator of Th1-type cytokine gene expression. This is PHD finger protein 11 (PHF11) from Bos taurus (Bovine).